The chain runs to 644 residues: Archaeal Lon protease (644 aa).

Positions M1–G18 are enriched in polar residues. The interval M1 to S30 is disordered. At M1–N137 the chain is on the cytoplasmic side. G71–S78 is an ATP binding site. 2 consecutive transmembrane segments (helical) span residues L138–N155 and Q156–L171. The Cytoplasmic portion of the chain corresponds to Q172 to H644. A Lon proteolytic domain is found at G438 to G617. Catalysis depends on residues S524 and K567.

It belongs to the peptidase S16 family. Archaeal LonB subfamily. As to quaternary structure, homohexamer. Organized in a ring with a central cavity.

The protein resides in the cell membrane. Its function is as follows. ATP-dependent serine protease that mediates the selective degradation of mutant and abnormal proteins as well as certain short-lived regulatory proteins. Degrades polypeptides processively. The polypeptide is Archaeal Lon protease (Methanothermobacter thermautotrophicus (strain ATCC 29096 / DSM 1053 / JCM 10044 / NBRC 100330 / Delta H) (Methanobacterium thermoautotrophicum)).